Consider the following 161-residue polypeptide: uncharacterized protein (161 aa).

The next 2 membrane-spanning stretches (helical) occupy residues 13-35 (VAAV…PHAN) and 40-62 (VFSA…PFIS).

Its subcellular location is the cell membrane. This is an uncharacterized protein from Archaeoglobus fulgidus (strain ATCC 49558 / DSM 4304 / JCM 9628 / NBRC 100126 / VC-16).